The chain runs to 86 residues: Photosystem I reaction center subunit PsaK (86 aa).

2 consecutive transmembrane segments (helical) span residues 14-34 (LQWSPTVGLIIIIANIIAIAF) and 57-77 (FGLPALLATTAFGHILGVGAV).

It belongs to the PsaG/PsaK family.

It is found in the cellular thylakoid membrane. This chain is Photosystem I reaction center subunit PsaK, found in Nostoc punctiforme (strain ATCC 29133 / PCC 73102).